Reading from the N-terminus, the 74-residue chain is Protein SlyX homolog (74 aa).

Positions 52–74 (LKQMQENQSTDSDPADEPPPPHY) are disordered.

This sequence belongs to the SlyX family.

The chain is Protein SlyX homolog from Idiomarina loihiensis (strain ATCC BAA-735 / DSM 15497 / L2-TR).